Reading from the N-terminus, the 226-residue chain is UPF0319 protein SO_1816 (226 aa).

A signal peptide spans 1–21; the sequence is MKSLLPISSLLVLLGSASVSA.

This sequence belongs to the UPF0319 family.

This is UPF0319 protein SO_1816 from Shewanella oneidensis (strain ATCC 700550 / JCM 31522 / CIP 106686 / LMG 19005 / NCIMB 14063 / MR-1).